Reading from the N-terminus, the 241-residue chain is Neuromodulin (241 aa).

Residues 1-26 show a composition bias toward basic and acidic residues; it reads TKQVEKNEDGDQKIEQDGIKPEDKAH. Residues 1–241 form a disordered region; the sequence is TKQVEKNEDG…EESKADQENA (241 aa). Residues 25-54 form the IQ domain; it reads AHKAATKIQASFRGHITRKKLKGEKKGDAP. Low complexity-rich tracts occupy residues 80–95 and 118–131; these read APAATEAAAADSAQQE and SEQPAPQAATPAAS. Basic and acidic residues-rich tracts occupy residues 132-147 and 159-171; these read SEEKTAAAAAPEREST and KADEAQDKEEPKQ. The span at 172-198 shows a compositional bias: low complexity; that stretch reads ADVPAADTTATTTPAAEDATAKATAQP. Composition is skewed to basic and acidic residues over residues 208 to 220 and 232 to 241; these read TEEKTDAVEETKP and EESKADQENA.

It belongs to the neuromodulin family. Binds calmodulin with a greater affinity in the absence of Ca(2+) than in its presence. Post-translationally, palmitoylated. Palmitoylation is essential for plasma membrane association.

Its subcellular location is the cell membrane. It is found in the cell projection. The protein resides in the growth cone membrane. It localises to the synapse. The protein localises to the filopodium membrane. This protein is associated with nerve growth. It is a major component of the motile 'growth cones' that form the tips of elongating axons. Plays a role in axonal and dendritic filopodia induction. This is Neuromodulin (GAP43) from Serinus canaria (Island canary).